A 216-amino-acid chain; its full sequence is Endo-1,4-beta-xylanase 1 (216 aa).

Positions 1–19 are cleaved as a signal peptide; sequence MFLTSVVSLVVGAISCVSA. In terms of domain architecture, GH11 spans 29–216; sequence QMTPRNSCYG…SSGSASITVS (188 aa). The active-site Nucleophile is the Glu112. Glu203 functions as the Proton donor in the catalytic mechanism.

This sequence belongs to the glycosyl hydrolase 11 (cellulase G) family.

The protein resides in the secreted. It carries out the reaction Endohydrolysis of (1-&gt;4)-beta-D-xylosidic linkages in xylans.. The protein operates within glycan degradation; xylan degradation. Functionally, endo-1,4-beta-xylanase involved in the hydrolysis of xylan, a major structural heterogeneous polysaccharide found in plant biomass representing the second most abundant polysaccharide in the biosphere, after cellulose. This Claviceps purpurea (Ergot fungus) protein is Endo-1,4-beta-xylanase 1 (xyl1).